We begin with the raw amino-acid sequence, 451 residues long: Protein tweety homolog 1-B (451 aa).

Residues 1–43 (MSTSHGYRASWWTYILHQVPHTNFQFEVVDNQFAPQEWSYQQA) lie on the Extracellular side of the membrane. The chain crosses the membrane as a helical span at residues 44-64 (LLFLASIAGLCLAISLVLICV). Over 65–86 (YLIKFCCCASQEDDDSKSHRVC) the chain is Cytoplasmic. The helical transmembrane segment at 87–107 (CVTWSCVAAVIICCAGIGIGF) threads the bilayer. Topologically, residues 108–214 (YGNSETNDGV…QVNFIEDYRW (107 aa)) are extracellular. The N-linked (GlcNAc...) asparagine glycan is linked to Asn-128. The chain crosses the membrane as a helical span at residues 215 to 235 (LAYILLLLLDLIICLFTLLSL). The Cytoplasmic portion of the chain corresponds to 236-240 (AKQIK). The chain crosses the membrane as a helical span at residues 241–261 (WLVIVMTVVSFFVLLLSWGSM). At 262 to 390 (GLEMATAVGL…LKGLCYDGME (129 aa)) the chain is on the extracellular side. Intrachain disulfides connect Cys-275–Cys-385 and Cys-303–Cys-370. N-linked (GlcNAc...) asparagine glycans are attached at residues Asn-284 and Asn-355. A helical membrane pass occupies residues 391–411 (GILFLLLFSFLSALSFTAAVC). Over 412-451 (SLPRAWKRFRNRDLDYDDMDEDDPFNPQESKRFVQWQSSI) the chain is Cytoplasmic.

Belongs to the tweety family. Homotetramer; disulfide-linked. Homodimer.

The protein localises to the cell membrane. It carries out the reaction chloride(in) = chloride(out). The enzyme catalyses L-glutamate(out) = L-glutamate(in). In terms of biological role, may act as a calcium-independent, swelling-dependent volume-regulated anion channel (VRAC-swell) which plays a pivotal role in the process of regulatory volume decrease (RVD) in the brain through the efflux of anions like chloride and organic osmolytes like glutamate. The polypeptide is Protein tweety homolog 1-B (ttyh1-b) (Xenopus laevis (African clawed frog)).